Here is a 401-residue protein sequence, read N- to C-terminus: Succinyl-diaminopimelate desuccinylase (401 aa).

H82 lines the Zn(2+) pocket. D84 is an active-site residue. D115 is a Zn(2+) binding site. Residue E149 is the Proton acceptor of the active site. Residues E150, E178, and H364 each contribute to the Zn(2+) site.

It belongs to the peptidase M20A family. DapE subfamily. Homodimer. Zn(2+) serves as cofactor. The cofactor is Co(2+).

The enzyme catalyses N-succinyl-(2S,6S)-2,6-diaminopimelate + H2O = (2S,6S)-2,6-diaminopimelate + succinate. It participates in amino-acid biosynthesis; L-lysine biosynthesis via DAP pathway; LL-2,6-diaminopimelate from (S)-tetrahydrodipicolinate (succinylase route): step 3/3. In terms of biological role, catalyzes the hydrolysis of N-succinyl-L,L-diaminopimelic acid (SDAP), forming succinate and LL-2,6-diaminopimelate (DAP), an intermediate involved in the bacterial biosynthesis of lysine and meso-diaminopimelic acid, an essential component of bacterial cell walls. This Verminephrobacter eiseniae (strain EF01-2) protein is Succinyl-diaminopimelate desuccinylase.